A 218-amino-acid polypeptide reads, in one-letter code: Large ribosomal subunit protein uL3 (218 aa).

Residues 126–163 form a disordered region; sequence HGFSRGPMTHGSKNHRQPGSIGAGTTPGRIYPGKRMSG.

The protein belongs to the universal ribosomal protein uL3 family. In terms of assembly, part of the 50S ribosomal subunit. Forms a cluster with proteins L14 and L19.

Functionally, one of the primary rRNA binding proteins, it binds directly near the 3'-end of the 23S rRNA, where it nucleates assembly of the 50S subunit. This chain is Large ribosomal subunit protein uL3, found in Synechococcus sp. (strain CC9311).